A 570-amino-acid polypeptide reads, in one-letter code: Sulfite reductase [NADPH] hemoprotein beta-component (570 aa).

Residues cysteine 434, cysteine 440, cysteine 479, and cysteine 483 each contribute to the [4Fe-4S] cluster site. Cysteine 483 serves as a coordination point for siroheme.

This sequence belongs to the nitrite and sulfite reductase 4Fe-4S domain family. In terms of assembly, alpha(8)-beta(8). The alpha component is a flavoprotein, the beta component is a hemoprotein. The cofactor is siroheme. [4Fe-4S] cluster is required as a cofactor.

It catalyses the reaction hydrogen sulfide + 3 NADP(+) + 3 H2O = sulfite + 3 NADPH + 4 H(+). Its pathway is sulfur metabolism; hydrogen sulfide biosynthesis; hydrogen sulfide from sulfite (NADPH route): step 1/1. In terms of biological role, component of the sulfite reductase complex that catalyzes the 6-electron reduction of sulfite to sulfide. This is one of several activities required for the biosynthesis of L-cysteine from sulfate. The polypeptide is Sulfite reductase [NADPH] hemoprotein beta-component (Cronobacter sakazakii (strain ATCC BAA-894) (Enterobacter sakazakii)).